Here is a 1843-residue protein sequence, read N- to C-terminus: Cilia- and flagella-associated protein 44 (1843 aa).

The disordered stretch occupies residues 1-86 (MKEPDDQDTS…PPVEVKEEPE (86 aa)). Polar residues predominate over residues 29–39 (LKSSQDTTADS). The segment covering 41–58 (TDGEESYLGDDLDLDDMD) has biased composition (acidic residues). WD repeat units lie at residues 214 to 255 (GAEK…PILR), 258 to 297 (AFSQDVFKVTFNPDNDEQLTTSGSGHIKFWEMAFTFTGLK), 308 to 346 (TSTSDIEGYAELPDGKVLSGSEWGNLLLWEGSLIKVELC), 353 to 390 (CHSGSINQIMLDEGEVITAGSDGSVRIWDFETIDTADV), 456 to 495 (FHSGPIAALAVSPLTYLMATTAMDCSVRVYDFSSKNPLVH), 497 to 541 (KFKQ…GLTV), and 561 to 600 (PHTDEVTALAYERDGDILATGSEDKTVFFFDVEKEYKPIG). The tract at residues 701–726 (REAFGEEEIPEEETSEEGEEEEPPLP) is disordered. Residues 705–724 (GEEEIPEEETSEEGEEEEPP) show a composition bias toward acidic residues. WD repeat units follow at residues 790-829 (TEDNPIRNITFSNDQTMMFCGMTNGAIRVYVLSENDPFLV) and 842-881 (NNYGSIKSITSSFDDQYLLTAGEDGNIFVFDIFSEFIVPK). Disordered stretches follow at residues 1040 to 1086 (YSKL…SVLE), 1266 to 1291 (QRKQKKRQDKSSSKQSGTGSGGSAGG), and 1488 to 1524 (KEVEGDADEDEESEESSEEESSLESDEDASGSEDDVF). Basic and acidic residues predominate over residues 1047-1071 (SQSERRQSKMERLEKEGPGKKESQR). S1069 carries the post-translational modification Phosphoserine. Residues 1072–1081 (DTGGSISLQE) show a composition bias toward polar residues. The span at 1492-1524 (GDADEDEESEESSEEESSLESDEDASGSEDDVF) shows a compositional bias: acidic residues. 2 coiled-coil regions span residues 1548 to 1603 (RLDI…RLNE) and 1631 to 1665 (LVFSNHSLDRLQERIVQLQEENAKQQKLNKECRER). A WD 10 repeat occupies 1699-1744 (IDLEALQTLSVNTTLEELKIKKLRKELSNAKELRMWEEKIAQVRWD).

The protein belongs to the CFAP44 family. As to expression, expressed in testis.

Its subcellular location is the cell projection. It is found in the cilium. The protein resides in the flagellum. The protein localises to the cytoplasm. It localises to the cytoskeleton. Its subcellular location is the flagellum axoneme. Its function is as follows. Flagellar protein involved in sperm flagellum axoneme organization and function. The polypeptide is Cilia- and flagella-associated protein 44 (Mus musculus (Mouse)).